Here is a 391-residue protein sequence, read N- to C-terminus: Bifunctional enzyme IspD/IspF (391 aa).

Positions 1–230 (MLAAGRGKRA…KKKMQMFPDI (230 aa)) are 2-C-methyl-D-erythritol 4-phosphate cytidylyltransferase. A 2-C-methyl-D-erythritol 2,4-cyclodiphosphate synthase region spans residues 231-391 (RTGNGYDVHS…TVLYPGEIPK (161 aa)). 2 residues coordinate a divalent metal cation: D237 and H239. 4-CDP-2-C-methyl-D-erythritol 2-phosphate is bound by residues 237–239 (DVH) and 263–264 (HS). A divalent metal cation is bound at residue H271. Residues 285–287 (DIG), 361–364 (TTNE), F368, and R371 contribute to the 4-CDP-2-C-methyl-D-erythritol 2-phosphate site.

This sequence in the N-terminal section; belongs to the IspD/TarI cytidylyltransferase family. IspD subfamily. In the C-terminal section; belongs to the IspF family. A divalent metal cation serves as cofactor.

The enzyme catalyses 2-C-methyl-D-erythritol 4-phosphate + CTP + H(+) = 4-CDP-2-C-methyl-D-erythritol + diphosphate. The catalysed reaction is 4-CDP-2-C-methyl-D-erythritol 2-phosphate = 2-C-methyl-D-erythritol 2,4-cyclic diphosphate + CMP. Its pathway is isoprenoid biosynthesis; isopentenyl diphosphate biosynthesis via DXP pathway; isopentenyl diphosphate from 1-deoxy-D-xylulose 5-phosphate: step 2/6. It functions in the pathway isoprenoid biosynthesis; isopentenyl diphosphate biosynthesis via DXP pathway; isopentenyl diphosphate from 1-deoxy-D-xylulose 5-phosphate: step 4/6. Bifunctional enzyme that catalyzes the formation of 4-diphosphocytidyl-2-C-methyl-D-erythritol from CTP and 2-C-methyl-D-erythritol 4-phosphate (MEP) (IspD), and catalyzes the conversion of 4-diphosphocytidyl-2-C-methyl-D-erythritol 2-phosphate (CDP-ME2P) to 2-C-methyl-D-erythritol 2,4-cyclodiphosphate (ME-CPP) with a corresponding release of cytidine 5-monophosphate (CMP) (IspF). The protein is Bifunctional enzyme IspD/IspF of Bartonella quintana (strain Toulouse) (Rochalimaea quintana).